The following is a 676-amino-acid chain: Methionine--tRNA ligase (676 aa).

The short motif at 15-25 (PYANGPIHLGH) is the 'HIGH' region element. Cys146, Cys149, Cys159, and Cys162 together coordinate Zn(2+). The 'KMSKS' region signature appears at 332-336 (KMSKS). Lys335 provides a ligand contact to ATP. Residues 575–676 (DFAKIDLRIA…EGAQPGMRVK (102 aa)) enclose the tRNA-binding domain.

This sequence belongs to the class-I aminoacyl-tRNA synthetase family. MetG type 1 subfamily. As to quaternary structure, homodimer. Zn(2+) serves as cofactor.

It localises to the cytoplasm. It catalyses the reaction tRNA(Met) + L-methionine + ATP = L-methionyl-tRNA(Met) + AMP + diphosphate. Its function is as follows. Is required not only for elongation of protein synthesis but also for the initiation of all mRNA translation through initiator tRNA(fMet) aminoacylation. The chain is Methionine--tRNA ligase from Shewanella sp. (strain MR-7).